Reading from the N-terminus, the 401-residue chain is Acetate kinase (401 aa).

Residue Asn-7 coordinates Mg(2+). Lys-14 is an ATP binding site. Arg-91 serves as a coordination point for substrate. Asp-148 serves as the catalytic Proton donor/acceptor. Residues His-208 to Gly-212, Asp-283 to Arg-285, and Gly-332 to Asn-336 each bind ATP. Glu-385 contributes to the Mg(2+) binding site.

The protein belongs to the acetokinase family. In terms of assembly, homodimer. Mg(2+) is required as a cofactor. Requires Mn(2+) as cofactor.

Its subcellular location is the cytoplasm. It catalyses the reaction acetate + ATP = acetyl phosphate + ADP. The protein operates within metabolic intermediate biosynthesis; acetyl-CoA biosynthesis; acetyl-CoA from acetate: step 1/2. Catalyzes the formation of acetyl phosphate from acetate and ATP. Can also catalyze the reverse reaction. This chain is Acetate kinase, found in Caldanaerobacter subterraneus subsp. tengcongensis (strain DSM 15242 / JCM 11007 / NBRC 100824 / MB4) (Thermoanaerobacter tengcongensis).